The chain runs to 146 residues: Leghemoglobin Lb120-1 (146 aa).

Residues 2-146 (GFTEKQEALV…LASAIKKAMN (145 aa)) form the Globin domain. Residues Y24 and Y29 each carry the nitrated tyrosine modification. A heme b-binding site is contributed by S44. S44 is subject to Phosphoserine. H61 is a binding site for O2. Heme b-binding residues include K64, H93, and K96. Residue Y134 is modified to Nitrated tyrosine.

The protein belongs to the plant globin family. Monomer. In terms of processing, nitrated in effective nodules and particularly in hypoxic conditions; this mechanism may play a protective role in the symbiosis by buffering toxic peroxynitrite NO(2)(-). Nitration level decrease during nodule senescence. Phosphorylation at Ser-44 disrupts the molecular environment of its porphyrin ring oxygen binding pocket, thus leading to a reduced oxygen consumption and to the delivery of oxygen O(2) to symbiosomes. As to expression, root nodules.

Its subcellular location is the cytoplasm. The protein localises to the cytosol. It localises to the nucleus. Functionally, leghemoglobin that reversibly binds oxygen O(2) through a pentacoordinated heme iron. In root nodules, facilitates the diffusion of oxygen to the bacteroids while preventing the bacterial nitrogenase from being inactivated by buffering dioxygen, nitric oxide and carbon monoxide, and promoting the formation of reactive oxygen species (ROS, e.g. H(2)O(2)). This role is essential for symbiotic nitrogen fixation (SNF). The chain is Leghemoglobin Lb120-1 from Pisum sativum (Garden pea).